Consider the following 750-residue polypeptide: Photosystem I P700 chlorophyll a apoprotein A1 (750 aa).

The next 8 membrane-spanning stretches (helical) occupy residues 70–93 (VFSAHFGQLAIIFIWLSGMYFHGA), 156–179 (LYSTAIGGLVFAALMLFAGWFHYH), 195–219 (LNHHLAGLLGLGSLSWAGHQVHVSL), 291–309 (TAHHHLAIAVLFLVAGHMY), 346–369 (WHAQLALNLAMLGSLTIIVAHHMY), 385–411 (LSLFTHHMWIGGFLIVGAAAHAAIFMV), 433–455 (AIISHLNWVCIFLGFHSFGLYIH), and 531–549 (FLVHHIHAFTIHVTVLILL). [4Fe-4S] cluster contacts are provided by cysteine 573 and cysteine 582. 2 consecutive transmembrane segments (helical) span residues 589–610 (HVFLGLFWMYNSISVVIFHFSW) and 664–686 (LSAYGLLFLGAHFVWAFSLMFLF). Histidine 675 provides a ligand contact to chlorophyll a'. Chlorophyll a contacts are provided by methionine 683 and tyrosine 691. Position 692 (tryptophan 692) interacts with phylloquinone. Residues 724 to 744 (AVGVAHYLLGGIATTWAFFLA) form a helical membrane-spanning segment.

It belongs to the PsaA/PsaB family. The PsaA/B heterodimer binds the P700 chlorophyll special pair and subsequent electron acceptors. PSI consists of a core antenna complex that captures photons, and an electron transfer chain that converts photonic excitation into a charge separation. The eukaryotic PSI reaction center is composed of at least 11 subunits. Requires P700 is a chlorophyll a/chlorophyll a' dimer, A0 is one or more chlorophyll a, A1 is one or both phylloquinones and FX is a shared 4Fe-4S iron-sulfur center. as cofactor.

The protein resides in the plastid. It localises to the chloroplast thylakoid membrane. The catalysed reaction is reduced [plastocyanin] + hnu + oxidized [2Fe-2S]-[ferredoxin] = oxidized [plastocyanin] + reduced [2Fe-2S]-[ferredoxin]. Functionally, psaA and PsaB bind P700, the primary electron donor of photosystem I (PSI), as well as the electron acceptors A0, A1 and FX. PSI is a plastocyanin-ferredoxin oxidoreductase, converting photonic excitation into a charge separation, which transfers an electron from the donor P700 chlorophyll pair to the spectroscopically characterized acceptors A0, A1, FX, FA and FB in turn. Oxidized P700 is reduced on the lumenal side of the thylakoid membrane by plastocyanin. The chain is Photosystem I P700 chlorophyll a apoprotein A1 from Marchantia polymorpha (Common liverwort).